Here is a 172-residue protein sequence, read N- to C-terminus: Large ribosomal subunit protein uL10 (172 aa).

It belongs to the universal ribosomal protein uL10 family. In terms of assembly, part of the ribosomal stalk of the 50S ribosomal subunit. The N-terminus interacts with L11 and the large rRNA to form the base of the stalk. The C-terminus forms an elongated spine to which L12 dimers bind in a sequential fashion forming a multimeric L10(L12)X complex.

Its function is as follows. Forms part of the ribosomal stalk, playing a central role in the interaction of the ribosome with GTP-bound translation factors. The protein is Large ribosomal subunit protein uL10 of Lawsonia intracellularis (strain PHE/MN1-00).